A 322-amino-acid polypeptide reads, in one-letter code: tRNA U34 carboxymethyltransferase (322 aa).

Carboxy-S-adenosyl-L-methionine contacts are provided by residues K91, W105, K110, G129, 179-180 (LE), M195, Y199, and R314.

The protein belongs to the class I-like SAM-binding methyltransferase superfamily. CmoB family. As to quaternary structure, homotetramer.

The enzyme catalyses carboxy-S-adenosyl-L-methionine + 5-hydroxyuridine(34) in tRNA = 5-carboxymethoxyuridine(34) in tRNA + S-adenosyl-L-homocysteine + H(+). Functionally, catalyzes carboxymethyl transfer from carboxy-S-adenosyl-L-methionine (Cx-SAM) to 5-hydroxyuridine (ho5U) to form 5-carboxymethoxyuridine (cmo5U) at position 34 in tRNAs. This is tRNA U34 carboxymethyltransferase from Pseudomonas aeruginosa (strain LESB58).